Reading from the N-terminus, the 333-residue chain is 4-hydroxy-3-methylbut-2-enyl diphosphate reductase (333 aa).

Position 34 (Cys34) interacts with [4Fe-4S] cluster. The (2E)-4-hydroxy-3-methylbut-2-enyl diphosphate site is built by His63 and His96. The dimethylallyl diphosphate site is built by His63 and His96. 2 residues coordinate isopentenyl diphosphate: His63 and His96. Cys118 is a [4Fe-4S] cluster binding site. Residue His146 coordinates (2E)-4-hydroxy-3-methylbut-2-enyl diphosphate. His146 provides a ligand contact to dimethylallyl diphosphate. His146 contributes to the isopentenyl diphosphate binding site. The Proton donor role is filled by Glu148. A (2E)-4-hydroxy-3-methylbut-2-enyl diphosphate-binding site is contributed by Thr186. Cys216 is a binding site for [4Fe-4S] cluster. 4 residues coordinate (2E)-4-hydroxy-3-methylbut-2-enyl diphosphate: Ser244, Ser245, Asn246, and Ser289. 4 residues coordinate dimethylallyl diphosphate: Ser244, Ser245, Asn246, and Ser289. 4 residues coordinate isopentenyl diphosphate: Ser244, Ser245, Asn246, and Ser289.

The protein belongs to the IspH family. [4Fe-4S] cluster is required as a cofactor.

It carries out the reaction isopentenyl diphosphate + 2 oxidized [2Fe-2S]-[ferredoxin] + H2O = (2E)-4-hydroxy-3-methylbut-2-enyl diphosphate + 2 reduced [2Fe-2S]-[ferredoxin] + 2 H(+). The enzyme catalyses dimethylallyl diphosphate + 2 oxidized [2Fe-2S]-[ferredoxin] + H2O = (2E)-4-hydroxy-3-methylbut-2-enyl diphosphate + 2 reduced [2Fe-2S]-[ferredoxin] + 2 H(+). It functions in the pathway isoprenoid biosynthesis; dimethylallyl diphosphate biosynthesis; dimethylallyl diphosphate from (2E)-4-hydroxy-3-methylbutenyl diphosphate: step 1/1. The protein operates within isoprenoid biosynthesis; isopentenyl diphosphate biosynthesis via DXP pathway; isopentenyl diphosphate from 1-deoxy-D-xylulose 5-phosphate: step 6/6. Functionally, catalyzes the conversion of 1-hydroxy-2-methyl-2-(E)-butenyl 4-diphosphate (HMBPP) into a mixture of isopentenyl diphosphate (IPP) and dimethylallyl diphosphate (DMAPP). Acts in the terminal step of the DOXP/MEP pathway for isoprenoid precursor biosynthesis. The protein is 4-hydroxy-3-methylbut-2-enyl diphosphate reductase of Mycolicibacterium gilvum (strain PYR-GCK) (Mycobacterium gilvum (strain PYR-GCK)).